The following is a 1203-amino-acid chain: Cingulin (1203 aa).

Positions 7–357 (MAEPRGPVDH…VMISSGSTKA (351 aa)) are head. The disordered stretch occupies residues 25-48 (EPVSGAEMGTLRRGGRRPAKDARA). Residues 48–62 (ASTYGVAVRVQGIAG) carry the ZIM motif. The interval 54 to 67 (AVRVQGIAGQPFVV) is interaction with TJP1/ZO1. The interval 89-268 (EASGALGSDF…PPSGFSRSRQ (180 aa)) is disordered. Serine 96, serine 135, serine 137, serine 140, serine 155, and serine 165 each carry phosphoserine. The span at 166 to 191 (PGSTIDTAPLSSVDSLINKFDSQLGG) shows a compositional bias: polar residues. The segment covering 207-231 (EQRKRSKSLDSRLPRDTLEERERQS) has biased composition (basic and acidic residues). Phosphoserine occurs at positions 214, 217, 258, 276, 338, and 351. Low complexity predominate over residues 246–267 (GSSKQPSQSQSPSPPSGFSRSR). The stretch at 358–1160 (VAGQGELTRK…SLEKDSWRKA (803 aa)) forms a coiled coil. N6-acetyllysine is present on lysine 579. Over residues 883–903 (ARREVADAQRQAKDWASEAEK) the composition is skewed to basic and acidic residues. Disordered stretches follow at residues 883–908 (ARRE…SGGL) and 1160–1181 (ASRS…EEFD). A tail region spans residues 1161 to 1203 (SRSAAESALKHEGLSSDEEFDSVYDPSSIASLLTESNLQTSSC). 3 positions are modified to phosphoserine: serine 1175, serine 1176, and serine 1182.

This sequence belongs to the cingulin family. In terms of assembly, homodimer. Interacts with TJP1/ZO1 and SPEF1.

The protein localises to the cell junction. It is found in the tight junction. Its function is as follows. Probably plays a role in the formation and regulation of the tight junction (TJ) paracellular permeability barrier. The chain is Cingulin from Papio anubis (Olive baboon).